We begin with the raw amino-acid sequence, 99 residues long: Putative protein adenylyltransferase MJ0141 (99 aa).

The GSX(10)DXD motif signature appears at 29-43; it reads GSYARGDYDEESDVD. Asp41 and Asp43 together coordinate Mg(2+).

This sequence belongs to the MntA antitoxin family. Mg(2+) serves as cofactor.

It carries out the reaction L-tyrosyl-[protein] + ATP = O-(5'-adenylyl)-L-tyrosyl-[protein] + diphosphate. The catalysed reaction is O-(5'-adenylyl)-L-tyrosyl-[protein] + ATP = O-[5'-(adenylyl-(5'-&gt;3')-adenylyl)]-L-tyrosyl-[protein] + diphosphate. Its function is as follows. Putative antitoxin component of a putative type VII toxin-antitoxin (TA) system. Its cognate toxin might be MF0142, which it might AMPylate. The polypeptide is Putative protein adenylyltransferase MJ0141 (Methanocaldococcus jannaschii (strain ATCC 43067 / DSM 2661 / JAL-1 / JCM 10045 / NBRC 100440) (Methanococcus jannaschii)).